Here is a 270-residue protein sequence, read N- to C-terminus: Interleukin-1 alpha (270 aa).

The propeptide occupies 1 to 114 (MAKVPDLFED…HDLEETIQPR (114 aa)). Asn64 carries N-linked (GlcNAc...) asparagine glycosylation. Lys85 is subject to N6-acetyllysine. The segment at 85-89 (KKRRL) is nuclear localization signal (NLS). The residue at position 90 (Ser90) is a Phosphoserine. Asn139 and Asn143 each carry an N-linked (GlcNAc...) asparagine glycan.

The protein belongs to the IL-1 family. As to quaternary structure, monomer. Interacts with TMED10; the interaction mediates the translocation from the cytoplasm into the ERGIC (endoplasmic reticulum-Golgi intermediate compartment) and thereby secretion. Interacts with IL1R1. Interacts with S100A13; this interaction is the first step in the export of IL1A, followed by direct translocation of this complex across the plasma membrane. Post-translationally, acetylated within its nuclear localization sequence, which impacts subcellular localization. In terms of processing, proteolytic processed by CAPN1 in a calcium-dependent manner. Cleavage from 31 kDa precursor to 18 kDa biologically active molecules. Phosphorylated. Phosphorylation greatly enhances susceptibility to digestion and promotes the conversion of pre-IL1A alpha to the biologically active IL1A.

It localises to the nucleus. Its subcellular location is the cytoplasm. The protein resides in the secreted. Functionally, cytokine constitutively present intracellularly in nearly all resting non-hematopoietic cells that plays an important role in inflammation and bridges the innate and adaptive immune systems. After binding to its receptor IL1R1 together with its accessory protein IL1RAP, forms the high affinity interleukin-1 receptor complex. Signaling involves the recruitment of adapter molecules such as MYD88, IRAK1 or IRAK4. In turn, mediates the activation of NF-kappa-B and the three MAPK pathways p38, p42/p44 and JNK pathways. Within the cell, acts as an alarmin and cell death results in its liberation in the extracellular space after disruption of the cell membrane to induce inflammation and alert the host to injury or damage. In addition to its role as a danger signal, which occurs when the cytokine is passively released by cell necrosis, directly senses DNA damage and acts as a signal for genotoxic stress without loss of cell integrity. The protein is Interleukin-1 alpha of Mus musculus (Mouse).